Reading from the N-terminus, the 448-residue chain is Protein TraN (448 aa).

Disordered stretches follow at residues 243 to 273 (NRVG…NSGE) and 411 to 448 (EAAR…NKPS). Residues 246–261 (GASRTATTARAGQQQS) are compositionally biased toward low complexity. Positions 262-271 (PAVKQSSGNS) are enriched in polar residues. A compositionally biased stretch (basic and acidic residues) spans 421–437 (RKQEQEKKQAQERERGR). Over residues 438–448 (SQSLGLSNKPS) the composition is skewed to polar residues.

The protein to H.influenzae HI_1407.

The sequence is that of Protein TraN (traN) from Escherichia coli.